Reading from the N-terminus, the 1292-residue chain is (E3-independent) E2 ubiquitin-conjugating enzyme (1292 aa).

Residues 1–37 are compositionally biased toward pro residues; the sequence is MADPAAPTPAAPAPAQAPAPAPEAVPAPAAAPVPAPA. 2 disordered regions span residues 1–56 and 85–114; these read MADP…EAGS and EDSD…EGRA. The span at 38-56 shows a compositional bias: low complexity; the sequence is PASDSASGPSSDSGPEAGS. A phosphoserine mark is found at serine 50, serine 87, serine 89, serine 399, and serine 401. 3 disordered regions span residues 401–459, 472–519, and 714–746; these read SPDT…AGEQ, RLHS…IPLS, and IEES…TDNG. Positions 406-427 are enriched in basic and acidic residues; sequence CSRDHSMEDPDKKGESKTKSEA. Serine 441 is subject to Phosphoserine. Positions 478–490 are enriched in acidic residues; it reads QDADDEAADDTDD. Phosphothreonine is present on residues threonine 488 and threonine 491. Over residues 491–510 the composition is skewed to low complexity; the sequence is TSSVTSSASSTTSSQSGSGT. Residues 512–536 carry the Nuclear localization signal motif; that stretch reads RKKSIPLSIKNLKRKHKRKKNKITR. Phosphoserine is present on serine 515. Residues 732–742 show a composition bias toward acidic residues; sequence DEWEDDSDSWE. A coiled-coil region spans residues 812–882; the sequence is RELKEAIKIL…IVEEEKMEAV (71 aa). Residue serine 836 is modified to Phosphoserine. Threonine 838 is modified (phosphothreonine). A Phosphoserine modification is found at serine 839. The segment covering 882 to 893 has biased composition (basic and acidic residues); that stretch reads VPDVERKEDKPE. The tract at residues 882–903 is disordered; it reads VPDVERKEDKPEGQSPVKAEWP. Serine 896 is modified (phosphoserine). Residues 953–1113 enclose the UBC core domain; the sequence is KFFSTVRKEM…ALIRVVQSMT (161 aa). The active-site Glycyl thioester intermediate is the cysteine 1040. The disordered stretch occupies residues 1160–1248; it reads NGVPKASSSP…KSYRSFLPEK (89 aa).

Belongs to the ubiquitin-conjugating enzyme family. Interacts with CPNE1 (via VWFA domain) and CPNE4 (via VWFA domain). Interacts with UBR2. In terms of processing, phosphorylated. Phosphorylation affects subcellular location. Ubiquitinated: autoubiquitinates, possibly affecting its subcellular location. As to expression, predominantly expressed in skeletal muscle and heart.

Its subcellular location is the cytoplasm. The protein resides in the nucleus. It catalyses the reaction S-ubiquitinyl-[E1 ubiquitin-activating enzyme]-L-cysteine + [acceptor protein]-L-lysine = [E1 ubiquitin-activating enzyme]-L-cysteine + N(6)-monoubiquitinyl-[acceptor protein]-L-lysine.. Its pathway is protein modification; protein ubiquitination. Inhibited by phenylarsine oxide (PAO). Its function is as follows. E2/E3 hybrid ubiquitin-protein ligase that displays both E2 and E3 ligase activities and mediates monoubiquitination of target proteins. Negatively regulates TRAF6-mediated NF-kappa-B activation independently of its E2 activity. Acts as a positive regulator of BMP7 signaling by mediating monoubiquitination of SMAD6, thereby regulating adipogenesis. Mediates monoubiquitination at different sites of the nuclear localization signal (NLS) of BAP1, leading to cytoplasmic retention of BAP1. Also able to monoubiquitinate the NLS of other chromatin-associated proteins, such as INO80 and CXXC1, affecting their subcellular location. Acts as a regulator of retrograde transport by assisting the TRIM27:MAGEL2 E3 ubiquitin ligase complex to mediate 'Lys-63'-linked ubiquitination of WASHC1, leading to promote endosomal F-actin assembly. The polypeptide is (E3-independent) E2 ubiquitin-conjugating enzyme (UBE2O) (Homo sapiens (Human)).